Here is a 504-residue protein sequence, read N- to C-terminus: Light-independent protochlorophyllide reductase subunit B (504 aa).

Asp36 contributes to the [4Fe-4S] cluster binding site. The Proton donor role is filled by Asp279. Position 414–415 (414–415 (GL)) interacts with substrate.

The protein belongs to the ChlB/BchB/BchZ family. Protochlorophyllide reductase is composed of three subunits; BchL, BchN and BchB. Forms a heterotetramer of two BchB and two BchN subunits. [4Fe-4S] cluster is required as a cofactor.

The enzyme catalyses chlorophyllide a + oxidized 2[4Fe-4S]-[ferredoxin] + 2 ADP + 2 phosphate = protochlorophyllide a + reduced 2[4Fe-4S]-[ferredoxin] + 2 ATP + 2 H2O. The protein operates within porphyrin-containing compound metabolism; bacteriochlorophyll biosynthesis (light-independent). Functionally, component of the dark-operative protochlorophyllide reductase (DPOR) that uses Mg-ATP and reduced ferredoxin to reduce ring D of protochlorophyllide (Pchlide) to form chlorophyllide a (Chlide). This reaction is light-independent. The NB-protein (BchN-BchB) is the catalytic component of the complex. The polypeptide is Light-independent protochlorophyllide reductase subunit B (Acidiphilium rubrum).